The chain runs to 260 residues: BTB/POZ domain-containing protein KCTD21 (260 aa).

The region spanning 3–72 (DPITLNVGGK…LRTSHLDLPE (70 aa)) is the BTB domain. The stretch at 88–112 (QVQPLIEALQEKEVELSKAEKNAML) forms a coiled coil.

As to quaternary structure, homopentamer. Interacts with KCTD11; KCTD21 and KCTD11 may associate in pentameric assemblies. Interacts (via BTB domain) with CUL3; indicative for a participation in a BCR (BTB-CUL3-RBX1) E3 ubiquitin-protein ligase complex. As to expression, highly expressed in cerebellum and brain. Expressed in adult cerebellum (at protein level).

The protein operates within protein modification; protein ubiquitination. Functionally, probable substrate-specific adapter of a BCR (BTB-CUL3-RBX1) E3 ubiquitin-protein ligase complex mediating the ubiquitination and subsequent proteasomal degradation of target proteins. Promotes the ubiquitination of HDAC1. Can function as antagonist of the Hedgehog pathway by affecting the nuclear transfer of transcription factor GLI1; the function probably occurs via HDAC1 down-regulation, keeping GLI1 acetylated and inactive. Inhibits cell growth and tumorigenicity of medulloblastoma (MDB). The chain is BTB/POZ domain-containing protein KCTD21 (Kctd21) from Mus musculus (Mouse).